Reading from the N-terminus, the 194-residue chain is Imidazoleglycerol-phosphate dehydratase (194 aa).

Belongs to the imidazoleglycerol-phosphate dehydratase family.

The protein localises to the cytoplasm. It catalyses the reaction D-erythro-1-(imidazol-4-yl)glycerol 3-phosphate = 3-(imidazol-4-yl)-2-oxopropyl phosphate + H2O. It functions in the pathway amino-acid biosynthesis; L-histidine biosynthesis; L-histidine from 5-phospho-alpha-D-ribose 1-diphosphate: step 6/9. This chain is Imidazoleglycerol-phosphate dehydratase, found in Listeria innocua serovar 6a (strain ATCC BAA-680 / CLIP 11262).